A 314-amino-acid chain; its full sequence is Ribonuclease Z (314 aa).

Positions 62, 64, 66, 67, 144, 215, and 273 each coordinate Zn(2+). D66 serves as the catalytic Proton acceptor.

The protein belongs to the RNase Z family. As to quaternary structure, homodimer. Zn(2+) serves as cofactor.

It catalyses the reaction Endonucleolytic cleavage of RNA, removing extra 3' nucleotides from tRNA precursor, generating 3' termini of tRNAs. A 3'-hydroxy group is left at the tRNA terminus and a 5'-phosphoryl group is left at the trailer molecule.. In terms of biological role, zinc phosphodiesterase, which displays some tRNA 3'-processing endonuclease activity. Probably involved in tRNA maturation, by removing a 3'-trailer from precursor tRNA. This chain is Ribonuclease Z, found in Prochlorococcus marinus (strain NATL2A).